We begin with the raw amino-acid sequence, 403 residues long: Enoyl-[acyl-carrier-protein] reductase [NADH] (403 aa).

NAD(+) is bound by residues 49 to 54 (GASSGY), 75 to 76 (FE), 112 to 113 (DA), and 141 to 142 (LA). Residue Tyr227 coordinates substrate. Tyr237 (proton donor) is an active-site residue. Residues Lys246 and 276–278 (VVT) contribute to the NAD(+) site.

This sequence belongs to the TER reductase family. As to quaternary structure, monomer.

The catalysed reaction is a 2,3-saturated acyl-[ACP] + NAD(+) = a (2E)-enoyl-[ACP] + NADH + H(+). The protein operates within lipid metabolism; fatty acid biosynthesis. Involved in the final reduction of the elongation cycle of fatty acid synthesis (FAS II). Catalyzes the reduction of a carbon-carbon double bond in an enoyl moiety that is covalently linked to an acyl carrier protein (ACP). This chain is Enoyl-[acyl-carrier-protein] reductase [NADH], found in Pseudomonas putida (strain ATCC 47054 / DSM 6125 / CFBP 8728 / NCIMB 11950 / KT2440).